Here is a 196-residue protein sequence, read N- to C-terminus: Riboflavin transporter RibU (196 aa).

5 helical membrane-spanning segments follow: residues L14–I34, I46–L66, V80–L100, L120–I140, and M164–L184.

Belongs to the prokaryotic riboflavin transporter (P-RFT) (TC 2.A.87) family. As to quaternary structure, in E.coli forms a stable energy-coupling factor (ECF) transporter complex probably composed of a membrane-embedded substrate-binding protein (S component), 2 ATP-binding proteins (A components) and 2 transmembrane proteins (T component). May be able to interact with more than 1 S component at a time.

It is found in the cell membrane. Its function is as follows. Probable riboflavin-binding protein that interacts with the energy-coupling factor (ECF) ABC-transporter complex. Unlike classic ABC transporters this ECF transporter provides the energy necessary to transport a number of different substrates. The substrates themselves are bound by transmembrane, not extracytoplasmic soluble proteins and transport it into cells. In Leuconostoc mesenteroides subsp. mesenteroides (strain ATCC 8293 / DSM 20343 / BCRC 11652 / CCM 1803 / JCM 6124 / NCDO 523 / NBRC 100496 / NCIMB 8023 / NCTC 12954 / NRRL B-1118 / 37Y), this protein is Riboflavin transporter RibU (ribU).